We begin with the raw amino-acid sequence, 342 residues long: MAEHDYHEDYGFNSFNDSSQEEHQDFLQFSKVFLPCMYLVVFVCGLVGNSLVLVISIFYHKLQSLTDVFLVNLPLADLVFVCTLPFWAYAGIHEWVFGQVMCKSLLGIYTINFYTSMLILTCITVDRFIVVVKATKAYNQQAKRMTWGKVTSLLIWVISLLVSLPQIIYGNVFNLDKLICGYHDEAISTVVLATQMTLGFFLPLLTMIVCYSVIIKTLLHAGGFQKHRSLKIIFLVMAVFLLTQMPFNLMKLIRSTHWEYYAMTSFHYTIMVTEAIAYLRACLNPVLYAFVSLKFRKNFWKLVKDIGCLPYLGVSHQWKSSEDNSKTFSASHNVEATSMFQL.

The Extracellular portion of the chain corresponds to 1–32 (MAEHDYHEDYGFNSFNDSSQEEHQDFLQFSKV). Asn-16 carries N-linked (GlcNAc...) asparagine glycosylation. Residues 33–59 (FLPCMYLVVFVCGLVGNSLVLVISIFY) traverse the membrane as a helical segment. Over 60-68 (HKLQSLTDV) the chain is Cytoplasmic. Residues 69-89 (FLVNLPLADLVFVCTLPFWAY) traverse the membrane as a helical segment. Residues 90–103 (AGIHEWVFGQVMCK) lie on the Extracellular side of the membrane. An intrachain disulfide couples Cys-102 to Cys-180. The chain crosses the membrane as a helical span at residues 104 to 125 (SLLGIYTINFYTSMLILTCITV). Topologically, residues 126–143 (DRFIVVVKATKAYNQQAK) are cytoplasmic. Residues 144-164 (RMTWGKVTSLLIWVISLLVSL) form a helical membrane-spanning segment. Over 165–187 (PQIIYGNVFNLDKLICGYHDEAI) the chain is Extracellular. The chain crosses the membrane as a helical span at residues 188-215 (STVVLATQMTLGFFLPLLTMIVCYSVII). Residues 216–231 (KTLLHAGGFQKHRSLK) are Cytoplasmic-facing. Residues 232-259 (IIFLVMAVFLLTQMPFNLMKLIRSTHWE) form a helical membrane-spanning segment. Residues 260–275 (YYAMTSFHYTIMVTEA) lie on the Extracellular side of the membrane. The helical transmembrane segment at 276 to 293 (IAYLRACLNPVLYAFVSL) threads the bilayer. At 294–342 (KFRKNFWKLVKDIGCLPYLGVSHQWKSSEDNSKTFSASHNVEATSMFQL) the chain is on the cytoplasmic side.

Belongs to the G-protein coupled receptor 1 family.

It localises to the cell membrane. Functionally, receptor for the C-X-C chemokine CXCL16. Used as a coreceptor by SIVs and by strains of HIV-2 and m-tropic HIV-1. In Pan troglodytes (Chimpanzee), this protein is C-X-C chemokine receptor type 6 (CXCR6).